Here is a 407-residue protein sequence, read N- to C-terminus: Spore germination protein KC (407 aa).

The N-terminal stretch at 1–20 (MVRKCLLAVLMLLSVIVLPG) is a signal peptide. The N-palmitoyl cysteine moiety is linked to residue C21. The S-diacylglycerol cysteine moiety is linked to residue C21.

The protein belongs to the GerABKC lipoprotein family.

The protein resides in the cell membrane. Functionally, involved in the germination response to the combination of glucose, fructose, L-asparagine, and KCl. The protein is Spore germination protein KC (gerKC) of Bacillus subtilis (strain 168).